A 244-amino-acid polypeptide reads, in one-letter code: tRNA pseudouridine synthase A (244 aa).

D52 functions as the Nucleophile in the catalytic mechanism. Y110 is a binding site for substrate.

Belongs to the tRNA pseudouridine synthase TruA family. Homodimer.

It carries out the reaction uridine(38/39/40) in tRNA = pseudouridine(38/39/40) in tRNA. Its function is as follows. Formation of pseudouridine at positions 38, 39 and 40 in the anticodon stem and loop of transfer RNAs. This chain is tRNA pseudouridine synthase A, found in Pelobacter propionicus (strain DSM 2379 / NBRC 103807 / OttBd1).